The sequence spans 244 residues: ATP synthase subunit a, chloroplastic (244 aa).

5 helical membrane passes run 35 to 55 (QVLI…VIAV), 92 to 112 (VPFI…GALL), 131 to 151 (INTT…AGLS), 196 to 216 (LVVV…VMFL), and 217 to 237 (GLFI…AYIG).

Belongs to the ATPase A chain family. F-type ATPases have 2 components, CF(1) - the catalytic core - and CF(0) - the membrane proton channel. CF(1) has five subunits: alpha(3), beta(3), gamma(1), delta(1), epsilon(1). CF(0) has four main subunits: a, b, b' and c.

It localises to the plastid. The protein localises to the chloroplast thylakoid membrane. In terms of biological role, key component of the proton channel; it plays a direct role in the translocation of protons across the membrane. The protein is ATP synthase subunit a, chloroplastic of Gossypium barbadense (Sea Island cotton).